A 143-amino-acid chain; its full sequence is NADH-quinone oxidoreductase subunit A (143 aa).

3 helical membrane-spanning segments follow: residues 8 to 28, 63 to 83, and 90 to 110; these read FGNV…GYLT, FYVV…LYPW, and LGVF…LGLV.

This sequence belongs to the complex I subunit 3 family. As to quaternary structure, NDH-1 is composed of 14 different subunits. Subunits NuoA, H, J, K, L, M, N constitute the membrane sector of the complex.

It is found in the cell inner membrane. It catalyses the reaction a quinone + NADH + 5 H(+)(in) = a quinol + NAD(+) + 4 H(+)(out). NDH-1 shuttles electrons from NADH, via FMN and iron-sulfur (Fe-S) centers, to quinones in the respiratory chain. The immediate electron acceptor for the enzyme in this species is believed to be a menaquinone. Couples the redox reaction to proton translocation (for every two electrons transferred, four hydrogen ions are translocated across the cytoplasmic membrane), and thus conserves the redox energy in a proton gradient. This is NADH-quinone oxidoreductase subunit A from Chlorobium phaeobacteroides (strain DSM 266 / SMG 266 / 2430).